A 244-amino-acid chain; its full sequence is Anti-H(O) lectin 1 (244 aa).

N-linked (GlcNAc...) asparagine glycosylation is found at Asn113 and Asn117. Positions 127 and 129 each coordinate Mn(2+). 4 residues coordinate Ca(2+): Asp129, Tyr131, Asn137, and Asp142. Mn(2+) contacts are provided by Asp142 and His145.

The protein belongs to the leguminous lectin family. As to quaternary structure, homotetramer.

Di-N-acetylchitobiose-binding anti-H(O) lectin. This chain is Anti-H(O) lectin 1, found in Cytisophyllum sessilifolium (Sessile-leaved cytisus).